A 182-amino-acid polypeptide reads, in one-letter code: Ribosome maturation factor RimM (182 aa).

The PRC barrel domain occupies 102 to 182 (EEDDYYWKDL…RVEVDWDPGF (81 aa)).

It belongs to the RimM family. As to quaternary structure, binds ribosomal protein uS19.

The protein resides in the cytoplasm. Its function is as follows. An accessory protein needed during the final step in the assembly of 30S ribosomal subunit, possibly for assembly of the head region. Essential for efficient processing of 16S rRNA. May be needed both before and after RbfA during the maturation of 16S rRNA. It has affinity for free ribosomal 30S subunits but not for 70S ribosomes. The protein is Ribosome maturation factor RimM of Yersinia pseudotuberculosis serotype IB (strain PB1/+).